The following is a 136-amino-acid chain: Transmembrane protein 203 (136 aa).

The interval 1–51 (MLFSLRELVQWLGFATFEIFVHLLALLVFSVLLALRVDGLVPGLSWWNVFV) is interaction with STING1. 4 helical membrane-spanning segments follow: residues 14-34 (FATF…VLLA), 50-72 (FVPF…VRLF), 81-101 (VLRL…EMLL), and 112-132 (LWFG…MIRA). Residues 52 to 136 (PFFAADGLST…LLMIRACRVN (85 aa)) form a required for the lysosomal localization of the STING-TMEM203 complex region.

In terms of assembly, homodimer. Interacts with ATP2A2, ITPR3 and STIM1. Interacts with STING1 (via transmembrane domain). Increased expression seen in T-lymphocytes from patients with systemic lupus erythematosus (SLE).

The protein localises to the endoplasmic reticulum membrane. The protein resides in the endoplasmic reticulum-Golgi intermediate compartment. It localises to the lysosome membrane. Its function is as follows. Involved in the regulation of cellular calcium homeotasis. Required for spermatogenesis. Acts as a regulator of STING-mediated inflammatory signaling in macrophages. Forms a complex with STING, promoting the activity of TBK1 kinase and the transcription factor IRF3, leading to activation of type I interferon expression. In Homo sapiens (Human), this protein is Transmembrane protein 203 (TMEM203).